The chain runs to 191 residues: Reticulon-like protein B15 (191 aa).

The 179-residue stretch at 13 to 191 folds into the Reticulon domain; that stretch reads VADLCLWKDK…SKIPRAPKVE (179 aa). 3 consecutive transmembrane segments (helical) span residues 23-43, 47-67, and 122-142; these read INSG…EFME, VPLL…WAKF, and VAII…YICL.

Its subcellular location is the endoplasmic reticulum membrane. The chain is Reticulon-like protein B15 (RTNLB15) from Arabidopsis thaliana (Mouse-ear cress).